Consider the following 220-residue polypeptide: Iron-sulfur cluster repair protein YtfE (220 aa).

The protein belongs to the RIC family. YtfE subfamily. As to quaternary structure, homodimer.

The protein localises to the cytoplasm. In terms of biological role, di-iron-containing protein involved in the repair of iron-sulfur clusters damaged by oxidative and nitrosative stress conditions. The protein is Iron-sulfur cluster repair protein YtfE of Escherichia coli O157:H7.